The sequence spans 119 residues: Large ribosomal subunit protein uL18 (119 aa).

Positions 1-22 are disordered; it reads MGHVEKVARRHKIKTRSKARGQ. Residues 8–19 are compositionally biased toward basic residues; it reads ARRHKIKTRSKA.

Belongs to the universal ribosomal protein uL18 family. As to quaternary structure, part of the 50S ribosomal subunit; part of the 5S rRNA/L5/L18/L25 subcomplex. Contacts the 5S and 23S rRNAs.

In terms of biological role, this is one of the proteins that bind and probably mediate the attachment of the 5S RNA into the large ribosomal subunit, where it forms part of the central protuberance. The polypeptide is Large ribosomal subunit protein uL18 (Chlorobium phaeobacteroides (strain BS1)).